A 91-amino-acid polypeptide reads, in one-letter code: N.vectensis toxin 8 (91 aa).

Positions 1–26 are cleaved as a signal peptide; that stretch reads MNSLLKVAVVCLVMLVACFVPRVILT. Disulfide bonds link cysteine 45-cysteine 76, cysteine 47-cysteine 67, and cysteine 60-cysteine 77.

In terms of tissue distribution, expressed in ectodermal gland cells.

In terms of biological role, has toxic effects on zebrafish larvae. It causes contractile paralysis and twitching of the tail within 20 minutes, followed by death within 30 minutes. Does not show any toxicity when injected into arthropods (cherry shrimps or grass shrimps). In Nematostella vectensis (Starlet sea anemone), this protein is N.vectensis toxin 8.